We begin with the raw amino-acid sequence, 254 residues long: PHD finger protein ALFIN-LIKE 8 (254 aa).

A disordered region spans residues 137-194 (GTAKKQSKEKTPKTSGKSNKSGTKPSRQPEPNSRGPKMPPPKDEDDSGGEEEEEEEDH). Low complexity predominate over residues 149 to 162 (KTSGKSNKSGTKPS). Residues 179 to 194 (DEDDSGGEEEEEEEDH) are compositionally biased toward acidic residues. A PHD-type zinc finger spans residues 196-248 (NTLCGACGDNYGQDEFWICCDACETWFHGKCVKITPAKAEHIKHYKCPNCSSS).

The protein belongs to the Alfin family. As to quaternary structure, interacts with H3K4me3 and to a lesser extent with H3K4me2.

It localises to the nucleus. Functionally, histone-binding component that specifically recognizes H3 tails trimethylated on 'Lys-4' (H3K4me3), which mark transcription start sites of virtually all active genes. This is PHD finger protein ALFIN-LIKE 8 from Oryza sativa subsp. japonica (Rice).